The sequence spans 854 residues: Envelope glycoprotein B (854 aa).

Residues 1-30 (MSKNWFPLLCASVLVVYVSIASSSTGTASG) form the signal peptide. The Virion surface segment spans residues 31–723 (AVTPTSPTEN…EGVVGFIKNP (693 aa)). 3 N-linked (GlcNAc...) asparagine; by host glycosylation sites follow: asparagine 40, asparagine 48, and asparagine 60. Disulfide bonds link cysteine 69/cysteine 524, cysteine 86/cysteine 480, cysteine 160/cysteine 225, cysteine 317/cysteine 364, and cysteine 546/cysteine 583. The involved in fusion and/or binding to host membrane stretch occupies residues 127–133 (SYSFIRE). An N-linked (GlcNAc...) asparagine; by host glycan is attached at asparagine 183. The involved in fusion and/or binding to host membrane stretch occupies residues 212–219 (GSTWLYTT). Asparagine 256, asparagine 275, asparagine 314, asparagine 356, asparagine 378, asparagine 382, asparagine 390, asparagine 423, asparagine 426, asparagine 442, asparagine 558, and asparagine 595 each carry an N-linked (GlcNAc...) asparagine; by host glycan. Hydrophobic membrane proximal region stretches follow at residues 669 to 721 (VEGK…GFIK) and 700 to 720 (VAIGAVGGAVASFVEGVVGFI). Residues 724–744 (FGSFTVILFLLAVLGVIYLIY) form a helical membrane-spanning segment. The Intravirion segment spans residues 745 to 854 (MRQKRAYEKP…YQKIQNEYEV (110 aa)).

Belongs to the herpesviridae glycoprotein B family. As to quaternary structure, homotrimer; disulfide-linked. Binds to heparan sulfate proteoglycans. Interacts with gH/gL heterodimer. A proteolytic cleavage by host furin generates two subunits that remain linked by disulfide bonds.

The protein resides in the virion membrane. Its subcellular location is the host cell membrane. It localises to the host endosome membrane. The protein localises to the host Golgi apparatus membrane. Envelope glycoprotein that forms spikes at the surface of virion envelope. Essential for the initial attachment to heparan sulfate moieties of the host cell surface proteoglycans. Involved in fusion of viral and cellular membranes leading to virus entry into the host cell. Following initial binding to its host receptors, membrane fusion is mediated by the fusion machinery composed at least of gB and the heterodimer gH/gL. May be involved in the fusion between the virion envelope and the outer nuclear membrane during virion egress. The protein is Envelope glycoprotein B of Macaca mulatta (Rhesus macaque).